The primary structure comprises 214 residues: uncharacterized protein (214 aa).

The first 24 residues, 1-24, serve as a signal peptide directing secretion; it reads MVTPHGILLLTITAAASLLWITFA. The tract at residues 99-121 is disordered; sequence APNDTQEQNSTRNKRDSESYTAT. A compositionally biased stretch (polar residues) spans 100-109; the sequence is PNDTQEQNST.

Component of the acid-insoluble and acid-soluble organic matrix of the aragonitic skeleton (at protein level).

Its subcellular location is the secreted. This is an uncharacterized protein from Acropora millepora (Staghorn coral).